A 265-amino-acid polypeptide reads, in one-letter code: Methylthioribulose-1-phosphate dehydratase (265 aa).

Position 118 (C118) interacts with substrate. H136 and H138 together coordinate Zn(2+). E161 functions as the Proton donor/acceptor in the catalytic mechanism. H226 serves as a coordination point for Zn(2+).

It belongs to the aldolase class II family. MtnB subfamily. Requires Zn(2+) as cofactor.

It is found in the cytoplasm. The enzyme catalyses 5-(methylsulfanyl)-D-ribulose 1-phosphate = 5-methylsulfanyl-2,3-dioxopentyl phosphate + H2O. It participates in amino-acid biosynthesis; L-methionine biosynthesis via salvage pathway; L-methionine from S-methyl-5-thio-alpha-D-ribose 1-phosphate: step 2/6. Its function is as follows. Catalyzes the dehydration of methylthioribulose-1-phosphate (MTRu-1-P) into 2,3-diketo-5-methylthiopentyl-1-phosphate (DK-MTP-1-P). In Scheffersomyces stipitis (strain ATCC 58785 / CBS 6054 / NBRC 10063 / NRRL Y-11545) (Yeast), this protein is Methylthioribulose-1-phosphate dehydratase.